Consider the following 45-residue polypeptide: Large ribosomal subunit protein bL34 (45 aa).

Belongs to the bacterial ribosomal protein bL34 family.

The chain is Large ribosomal subunit protein bL34 from Salinispora arenicola (strain CNS-205).